The following is a 280-amino-acid chain: Phosphonates import ATP-binding protein PhnC (280 aa).

Positions 2–245 (FELKNVTRRF…AVKEIYGTDK (244 aa)) constitute an ABC transporter domain. Residue 34-41 (GRSGAGKS) coordinates ATP. A disordered region spans residues 257 to 280 (TSLESKRRAEDVSSGRVAKAAAVH). The span at 260-269 (ESKRRAEDVS) shows a compositional bias: basic and acidic residues.

The protein belongs to the ABC transporter superfamily. Phosphonates importer (TC 3.A.1.9.1) family. As to quaternary structure, the complex is composed of two ATP-binding proteins (PhnC), two transmembrane proteins (PhnE) and a solute-binding protein (PhnD).

The protein localises to the cell inner membrane. The catalysed reaction is phosphonate(out) + ATP + H2O = phosphonate(in) + ADP + phosphate + H(+). Its function is as follows. Part of the ABC transporter complex PhnCDE involved in phosphonates import. Responsible for energy coupling to the transport system. The protein is Phosphonates import ATP-binding protein PhnC of Rhizobium johnstonii (strain DSM 114642 / LMG 32736 / 3841) (Rhizobium leguminosarum bv. viciae).